We begin with the raw amino-acid sequence, 233 residues long: Orotidine 5'-phosphate decarboxylase (233 aa).

Residues Asp-9, Lys-31, 58 to 67, Thr-120, Arg-182, Gln-191, Gly-211, and Arg-212 contribute to the substrate site; that span reads DLKLHDIPNT. Residue Lys-60 is the Proton donor of the active site.

The protein belongs to the OMP decarboxylase family. Type 1 subfamily. Homodimer.

It catalyses the reaction orotidine 5'-phosphate + H(+) = UMP + CO2. Its pathway is pyrimidine metabolism; UMP biosynthesis via de novo pathway; UMP from orotate: step 2/2. Catalyzes the decarboxylation of orotidine 5'-monophosphate (OMP) to uridine 5'-monophosphate (UMP). The polypeptide is Orotidine 5'-phosphate decarboxylase (Listeria monocytogenes serovar 1/2a (strain ATCC BAA-679 / EGD-e)).